The sequence spans 391 residues: Polyketide synthase 5 (391 aa).

C164 is a catalytic residue.

This sequence belongs to the thiolase-like superfamily. Chalcone/stilbene synthases family. In terms of assembly, homodimer. In terms of tissue distribution, expressed in fruits.

The enzyme catalyses (E)-4-coumaroyl-CoA + 3 malonyl-CoA + 3 H(+) = 2',4,4',6'-tetrahydroxychalcone + 3 CO2 + 4 CoA. Its pathway is secondary metabolite biosynthesis; flavonoid biosynthesis. Functionally, polyketide synthase producing naringenin chalcone. Can use p-coumaryl-CoA as substrate. The sequence is that of Polyketide synthase 5 (PKS5) from Rubus idaeus (Raspberry).